Reading from the N-terminus, the 189-residue chain is MSDSSKEKKKKFADMVSRQKGDDQQSDNHKQTDDLNEDLNTLKERAVQLEDHLRRAVADNENVKRIMQKQISDASDYAVTKLARDMIDSCDNLKRVMEILKDGDPVHEGIKVAYQKIINDLKKHGIKEVDPLGELFDSNLHQAVVEREDNEKEPGTIVEVLQTGYTIKNRLLRPAMVILSKKSADCGND.

Residues 1–37 (MSDSSKEKKKKFADMVSRQKGDDQQSDNHKQTDDLNE) form a disordered region. The span at 17–33 (SRQKGDDQQSDNHKQTD) shows a compositional bias: basic and acidic residues.

The protein belongs to the GrpE family. As to quaternary structure, homodimer.

The protein localises to the cytoplasm. In terms of biological role, participates actively in the response to hyperosmotic and heat shock by preventing the aggregation of stress-denatured proteins, in association with DnaK and GrpE. It is the nucleotide exchange factor for DnaK and may function as a thermosensor. Unfolded proteins bind initially to DnaJ; upon interaction with the DnaJ-bound protein, DnaK hydrolyzes its bound ATP, resulting in the formation of a stable complex. GrpE releases ADP from DnaK; ATP binding to DnaK triggers the release of the substrate protein, thus completing the reaction cycle. Several rounds of ATP-dependent interactions between DnaJ, DnaK and GrpE are required for fully efficient folding. The protein is Protein GrpE of Wolbachia pipientis wMel.